Reading from the N-terminus, the 436-residue chain is Serine hydroxymethyltransferase (436 aa).

(6S)-5,6,7,8-tetrahydrofolate is bound by residues Leu133 and 137–139; that span reads GHI. Lys242 is modified (N6-(pyridoxal phosphate)lysine).

Belongs to the SHMT family. In terms of assembly, homodimer. Pyridoxal 5'-phosphate is required as a cofactor.

Its subcellular location is the cytoplasm. The enzyme catalyses (6R)-5,10-methylene-5,6,7,8-tetrahydrofolate + glycine + H2O = (6S)-5,6,7,8-tetrahydrofolate + L-serine. It participates in one-carbon metabolism; tetrahydrofolate interconversion. Its pathway is amino-acid biosynthesis; glycine biosynthesis; glycine from L-serine: step 1/1. Functionally, catalyzes the reversible interconversion of serine and glycine with tetrahydrofolate (THF) serving as the one-carbon carrier. This reaction serves as the major source of one-carbon groups required for the biosynthesis of purines, thymidylate, methionine, and other important biomolecules. Also exhibits THF-independent aldolase activity toward beta-hydroxyamino acids, producing glycine and aldehydes, via a retro-aldol mechanism. This is Serine hydroxymethyltransferase from Pelagibacter ubique (strain HTCC1062).